The primary structure comprises 252 residues: D-aminoacyl-tRNA deacylase (252 aa).

The protein belongs to the DtdA deacylase family. In terms of assembly, monomer. Requires Zn(2+) as cofactor.

The enzyme catalyses a D-aminoacyl-tRNA + H2O = a tRNA + a D-alpha-amino acid + H(+). It carries out the reaction glycyl-tRNA(Ala) + H2O = tRNA(Ala) + glycine + H(+). Functionally, D-aminoacyl-tRNA deacylase with broad substrate specificity. By recycling D-aminoacyl-tRNA to D-amino acids and free tRNA molecules, this enzyme counteracts the toxicity associated with the formation of D-aminoacyl-tRNA entities in vivo. This is D-aminoacyl-tRNA deacylase from Pyrobaculum neutrophilum (strain DSM 2338 / JCM 9278 / NBRC 100436 / V24Sta) (Thermoproteus neutrophilus).